A 393-amino-acid polypeptide reads, in one-letter code: PPE family protein PPE26 (393 aa).

This sequence belongs to the mycobacterial PPE family. Interacts with human TLR2.

Functionally, probably plays a key role in regulating innate and adaptive immune responses through human Toll-like receptor 2 (TLR2). Interacts with TLR2, leading to the subsequent activation of the mitogen-activated protein kinase (MAPK) and nuclear factor kappa B (NF-kappa-B) signaling pathways. Stimulates macrophage activation by augmenting pro-inflammatory cytokine production (TNF-alpha, IL-6 and IL-12p40) and the expression of cell surface molecules (CD80, CD86, MHC class I and II). Also participates in adaptive immunity by directing Th1-polarised immune responses. The sequence is that of PPE family protein PPE26 from Mycobacterium tuberculosis (strain ATCC 25618 / H37Rv).